The following is a 327-amino-acid chain: Gonadotropin-releasing hormone receptor (327 aa).

Residues 1-38 (MANNASLEQDQNHCSAINNSIPLTQGKLPTLTLSGKIR) lie on the Extracellular side of the membrane. Asn4 and Asn18 each carry an N-linked (GlcNAc...) asparagine glycan. A helical transmembrane segment spans residues 39-58 (VTVTFFLFLLSTAFNASFLV). Residues 59 to 77 (KLQRWTQKRKKGKKLSRMK) are Cytoplasmic-facing. A helical transmembrane segment spans residues 78 to 97 (VLLKHLTLANLLETLIVMPL). Topologically, residues 98–115 (DGMWNITVQWYAGEFLCK) are extracellular. The N-linked (GlcNAc...) asparagine glycan is linked to Asn102. Cys114 and Cys195 are joined by a disulfide. The helical transmembrane segment at 116–137 (VLSYLKLFSMYAPAFMMVVISL) threads the bilayer. Residues 138 to 164 (DRSLAVTQPLAVQSKSKLERSMTSLAW) are Cytoplasmic-facing. A helical membrane pass occupies residues 165-184 (ILSIVFAGPQLYIFRMIYLA). At 185–211 (DGSGPAVFSQCVTHCSFPQWWHEAFYN) the chain is on the extracellular side. The chain crosses the membrane as a helical span at residues 212–231 (FFTFSCLFIIPLLIMLICNA). The Cytoplasmic segment spans residues 232 to 280 (KIIFALTRVLHQDPRKLQLNQSKNNIPRARLRTLKMTVAFGTSFVICWT). Residues 281–299 (PYYVLGIWYWFDPEMLNRV) form a helical membrane-spanning segment. Residues 300 to 305 (SEPVNH) are Extracellular-facing. The helical transmembrane segment at 306 to 325 (FFFLFAFLNPCFDPLIYGYF) threads the bilayer. At 326 to 327 (SL) the chain is on the cytoplasmic side.

Belongs to the G-protein coupled receptor 1 family.

It is found in the cell membrane. In terms of biological role, receptor for gonadotropin releasing hormone (GnRH) that mediates the action of GnRH to stimulate the secretion of the gonadotropic hormones luteinizing hormone (LH) and follicle-stimulating hormone (FSH). This receptor mediates its action by association with G-proteins that activate a phosphatidylinositol-calcium second messenger system. In Rattus norvegicus (Rat), this protein is Gonadotropin-releasing hormone receptor (Gnrhr).